Here is a 272-residue protein sequence, read N- to C-terminus: Glutamate racemase (272 aa).

Residues Asp-9 to Ser-10 and Tyr-41 to Gly-42 each bind substrate. Cys-73 serves as the catalytic Proton donor/acceptor. A substrate-binding site is contributed by Asn-74–Thr-75. Cys-183 (proton donor/acceptor) is an active-site residue. Residue Thr-184–His-185 coordinates substrate.

Belongs to the aspartate/glutamate racemases family.

It catalyses the reaction L-glutamate = D-glutamate. It participates in cell wall biogenesis; peptidoglycan biosynthesis. Its function is as follows. Provides the (R)-glutamate required for cell wall biosynthesis. This chain is Glutamate racemase, found in Shewanella sp. (strain MR-7).